The sequence spans 359 residues: Peptide chain release factor 1 (359 aa).

At Gln-235 the chain carries N5-methylglutamine. Residues 283–309 are disordered; the sequence is QKAESERSQARRSQVGSGDRSERIRTY.

The protein belongs to the prokaryotic/mitochondrial release factor family. Methylated by PrmC. Methylation increases the termination efficiency of RF1.

It localises to the cytoplasm. Functionally, peptide chain release factor 1 directs the termination of translation in response to the peptide chain termination codons UAG and UAA. This Brucella melitensis biotype 2 (strain ATCC 23457) protein is Peptide chain release factor 1.